The following is a 486-amino-acid chain: Cardiolipin synthase A (486 aa).

The next 2 helical transmembrane spans lie at 3–23 (TFYTVISWLLVFGYWLLIAGV) and 38–58 (MAWLLVIYILPLVGIVAYLSF). PLD phosphodiesterase domains lie at 219–246 (MDLRQHRKIILIDNRIAYTGSMNMVDPR) and 399–426 (KDGLLHTKSVLVDGQLSLVGTVNLDMRS). Catalysis depends on residues His224, Lys226, Asp231, His404, Lys406, and Asp411.

It belongs to the phospholipase D family. Cardiolipin synthase subfamily. ClsA sub-subfamily.

The protein resides in the cell inner membrane. The enzyme catalyses 2 a 1,2-diacyl-sn-glycero-3-phospho-(1'-sn-glycerol) = a cardiolipin + glycerol. Catalyzes the reversible phosphatidyl group transfer from one phosphatidylglycerol molecule to another to form cardiolipin (CL) (diphosphatidylglycerol) and glycerol. In Pectobacterium carotovorum subsp. carotovorum (strain PC1), this protein is Cardiolipin synthase A.